A 303-amino-acid chain; its full sequence is MWFSNLICYRFKQDVSYTQEDFDKALEQDLFRPCTGQELATFGWTKAFGKHGETLSHFSQKSILVCAKREEKVLPASVINELVAEKVDLIEAEENRPVKKKEKDELKENILHTLLPQAFKKSSLQFAFIDQENGWVVVNSGSFNKAEELLALLRKSLGTLPVVPAFANYDLDVFLTDWLTNFSTPEGFAIGSDAELEEADDSGAQVKLKGHDLSCDEVKSHLETGKRVTKLALDWQERVKFMLQNDGSIKRLSYSDTLKEENADIPKEDMAVKLDADFILASEEIKQLLEELTQGLGDIDDLA.

Belongs to the RdgC family.

The protein resides in the cytoplasm. Its subcellular location is the nucleoid. In terms of biological role, may be involved in recombination. The polypeptide is Recombination-associated protein RdgC (Pseudoalteromonas translucida (strain TAC 125)).